The sequence spans 1127 residues: DNA-directed RNA polymerase I subunit RPA2 homolog (1127 aa).

Serine 1025 bears the Phosphoserine mark.

Belongs to the RNA polymerase beta chain family. Component of the RNA polymerase I (Pol I) complex consisting of at least 13 subunits.

The protein localises to the nucleus. It localises to the nucleolus. It catalyses the reaction RNA(n) + a ribonucleoside 5'-triphosphate = RNA(n+1) + diphosphate. Its activity is regulated as follows. Antisense ribosomal siRNAs silence rRNA expression during the elongation phase by decreasing rpoa-2 occupancy downstream of the RNAi-targeted region in nrde-2-dependent manner. DNA-dependent RNA polymerase catalyzes the transcription of DNA into RNA using the four ribonucleoside triphosphates as substrates. Second largest core component of RNA polymerase I which synthesizes ribosomal RNA precursors. Proposed to contribute to the polymerase catalytic activity and forms the polymerase active center together with the largest subunit. Pol I is composed of mobile elements and RPA2 is part of the core element with the central large cleft and probably a clamp element that moves to open and close the cleft. Specifically binds to 18S, 5.8S and 26S rDNA, but not to 5S rDNA. The protein is DNA-directed RNA polymerase I subunit RPA2 homolog of Caenorhabditis elegans.